We begin with the raw amino-acid sequence, 265 residues long: Small ribosomal subunit protein uS2 (265 aa).

It belongs to the universal ribosomal protein uS2 family.

The sequence is that of Small ribosomal subunit protein uS2 from Microcystis aeruginosa (strain NIES-843 / IAM M-2473).